A 527-amino-acid chain; its full sequence is Phosphoenolpyruvate carboxykinase (ATP) (527 aa).

Substrate-binding residues include Arg-55, Tyr-191, and Lys-197. Residues Lys-197, His-216, and 232–240 each bind ATP; that span reads GLSGTGKTT. Residues Lys-197 and His-216 each coordinate Mn(2+). Mn(2+) is bound at residue Asp-253. The ATP site is built by Glu-281, Arg-318, and Thr-443. Position 318 (Arg-318) interacts with substrate.

The protein belongs to the phosphoenolpyruvate carboxykinase (ATP) family. The cofactor is Mn(2+).

It is found in the cytoplasm. It carries out the reaction oxaloacetate + ATP = phosphoenolpyruvate + ADP + CO2. The protein operates within carbohydrate biosynthesis; gluconeogenesis. Functionally, involved in the gluconeogenesis. Catalyzes the conversion of oxaloacetate (OAA) to phosphoenolpyruvate (PEP) through direct phosphoryl transfer between the nucleoside triphosphate and OAA. This Brevibacillus brevis (strain 47 / JCM 6285 / NBRC 100599) protein is Phosphoenolpyruvate carboxykinase (ATP).